A 62-amino-acid polypeptide reads, in one-letter code: Large ribosomal subunit protein bL28 (62 aa).

Residues 1 to 28 (MARVCAITGRKARSGNSRSHAMNATKRK) form a disordered region.

This sequence belongs to the bacterial ribosomal protein bL28 family.

In Bacillus thuringiensis (strain Al Hakam), this protein is Large ribosomal subunit protein bL28.